The chain runs to 91 residues: Acylphosphatase (91 aa).

The Acylphosphatase-like domain maps to 3 to 91 (TVTMKVTGLV…EKFTRFSVVY (89 aa)). Active-site residues include Arg18 and Asn36.

This sequence belongs to the acylphosphatase family.

The enzyme catalyses an acyl phosphate + H2O = a carboxylate + phosphate + H(+). In Lactobacillus gasseri (strain ATCC 33323 / DSM 20243 / BCRC 14619 / CIP 102991 / JCM 1131 / KCTC 3163 / NCIMB 11718 / NCTC 13722 / AM63), this protein is Acylphosphatase (acyP).